Consider the following 231-residue polypeptide: MNRLLSVFALGGAVLLAGCVAPTPKPNDPYYAPVLPRTPLPAAANNGSIYQAGFEQNLYSDRKAFRVGDIITITLNEKTSASKNAGSQIQKNSKADIGLTSLFGSTPNTNNPFGGGDLSLEAGYNGERATKGDSKATQGNTLTGSITVTVAEVLPNGIIAVRGEKWLTLNTGEELVRIAGMVRADDIATDNTVPSTRVADARITYSGTGSFADASQPGWLDRFFISPLWPF.

Positions methionine 1 to glycine 18 are cleaved as a signal peptide. Cysteine 19 carries the N-palmitoyl cysteine lipid modification. Cysteine 19 carries S-diacylglycerol cysteine lipidation.

Belongs to the FlgH family. As to quaternary structure, the basal body constitutes a major portion of the flagellar organelle and consists of four rings (L,P,S, and M) mounted on a central rod.

The protein localises to the cell outer membrane. The protein resides in the bacterial flagellum basal body. Its function is as follows. Assembles around the rod to form the L-ring and probably protects the motor/basal body from shearing forces during rotation. In Pseudomonas putida (strain GB-1), this protein is Flagellar L-ring protein.